Consider the following 304-residue polypeptide: 4-diphosphocytidyl-2-C-methyl-D-erythritol kinase (304 aa).

The active site involves Lys-20. 106–116 (PVASGIGGGSG) lines the ATP pocket. Asp-148 is an active-site residue.

It belongs to the GHMP kinase family. IspE subfamily.

The enzyme catalyses 4-CDP-2-C-methyl-D-erythritol + ATP = 4-CDP-2-C-methyl-D-erythritol 2-phosphate + ADP + H(+). It functions in the pathway isoprenoid biosynthesis; isopentenyl diphosphate biosynthesis via DXP pathway; isopentenyl diphosphate from 1-deoxy-D-xylulose 5-phosphate: step 3/6. In terms of biological role, catalyzes the phosphorylation of the position 2 hydroxy group of 4-diphosphocytidyl-2C-methyl-D-erythritol. The polypeptide is 4-diphosphocytidyl-2-C-methyl-D-erythritol kinase (Bartonella bacilliformis (strain ATCC 35685 / KC583 / Herrer 020/F12,63)).